We begin with the raw amino-acid sequence, 282 residues long: Putative hydrolase Bamb_4846 (282 aa).

3 residues coordinate Mg(2+): Glu124, Glu126, and Asp155.

This sequence belongs to the FAH family. Mg(2+) is required as a cofactor.

This chain is Putative hydrolase Bamb_4846, found in Burkholderia ambifaria (strain ATCC BAA-244 / DSM 16087 / CCUG 44356 / LMG 19182 / AMMD) (Burkholderia cepacia (strain AMMD)).